Consider the following 269-residue polypeptide: Type II iodothyronine deiodinase (269 aa).

The Lumenal portion of the chain corresponds to 1–9 (MGILSVDLL). The chain crosses the membrane as a helical; Signal-anchor for type III membrane protein span at residues 10–34 (ITLQILPVFFSNCLFLALYDSVILL). At 35 to 269 (KHVVLLLSRS…KNFSKRUKLD (235 aa)) the chain is on the cytoplasmic side. The interval 83 to 103 (NSSVVHVSSPEGGDTSGNGAQ) is disordered. Sec-133 is an active-site residue. 2 non-standard amino acids (selenocysteine) are found at residues Sec-133 and Sec-266.

This sequence belongs to the iodothyronine deiodinase family. As to quaternary structure, predominantly monomer. Can form homodimers but homodimerization is not essential for enzyme activity. Interacts with USP20 and USP33. Interacts with MARCHF6. In terms of processing, ubiquitinated by MARCHF6, leading to its degradation by the proteasome. Deubiquitinated by USP20 and USP33. Highly expressed in thyroid, mammary and pituitary glands, then in hypothalamus. Low levels detected in diaphragm, heart, kidney and lung.

It localises to the endoplasmic reticulum membrane. The enzyme catalyses 3,3',5-triiodo-L-thyronine + iodide + A + H(+) = L-thyroxine + AH2. It catalyses the reaction 3,3'-diiodo-L-thyronine + iodide + A + H(+) = 3,3',5'-triiodo-L-thyronine + AH2. It carries out the reaction 3'-iodo-L-thyronine + iodide + A + H(+) = 3',5'-diiodo-L-thyronine + AH2. The catalysed reaction is 3,3'-diiodothyronamine + iodide + A + H(+) = 3,3',5'-triiodothyronamine + AH2. The enzyme catalyses 3'-iodothyronamine + iodide + A + H(+) = 3',5'-diiodothyronamine + AH2. Its function is as follows. Plays a crucial role in the metabolism of thyroid hormones (TH) and has specific roles in TH activation and inactivation by deiodination. Catalyzes the deiodination of L-thyroxine (T4) to 3,5,3'-triiodothyronine (T3), 3,3',5'-triiodothyronine (rT3) to 3,3'-diiodothyronine (3,3'-T2) and 3',5'-diiodothyronine (3',5'-T2) to 3'-monoiodothyronine (3'-T1) via outer-ring deiodination (ORD). Catalyzes the phenolic ring deiodinations of 3,3',5'-triiodothyronamine and 3',5'- diiodothyronamine. This Bos taurus (Bovine) protein is Type II iodothyronine deiodinase (DIO2).